A 319-amino-acid polypeptide reads, in one-letter code: Ribosomal RNA small subunit methyltransferase H (319 aa).

S-adenosyl-L-methionine is bound by residues 39–41, D59, F83, D104, and Q111; that span reads GGH.

Belongs to the methyltransferase superfamily. RsmH family.

Its subcellular location is the cytoplasm. The enzyme catalyses cytidine(1402) in 16S rRNA + S-adenosyl-L-methionine = N(4)-methylcytidine(1402) in 16S rRNA + S-adenosyl-L-homocysteine + H(+). Functionally, specifically methylates the N4 position of cytidine in position 1402 (C1402) of 16S rRNA. The sequence is that of Ribosomal RNA small subunit methyltransferase H from Ralstonia pickettii (strain 12D).